Here is a 365-residue protein sequence, read N- to C-terminus: Zinc finger TRAF-type-containing protein 1-B (365 aa).

The segment at 1 to 56 is disordered; the sequence is MSEEREAPGPLASSSAGLGAEVGQEEVPGGAGPARLLLLPSDSDGPPKKRLRSEAE. Residues 72–117 form an RING-type; degenerate zinc finger; that stretch reads CAVCLDLPKASVYQCTNGHLMCAGCFIHLLADARLKEEQATCPNCR. The TRAF-type zinc-finger motif lies at 113–186; that stretch reads CPNCRCEISK…PWQGPYHELT (74 aa).

The protein belongs to the ZFTRAF1 family. As to quaternary structure, interacts with LGALS3.

Its subcellular location is the cytoplasm. This is Zinc finger TRAF-type-containing protein 1-B from Xenopus laevis (African clawed frog).